The following is a 308-amino-acid chain: Lysophosphatidic acid receptor 6 (308 aa).

Over 1 to 16 (MVSSNCSTEDSFKYTL) the chain is Extracellular. Asn-5 carries an N-linked (GlcNAc...) asparagine glycan. The chain crosses the membrane as a helical span at residues 17 to 43 (YGCVFSMVFVLGLIANCVAIYIFTFTL). Topologically, residues 44–52 (KVRNETTTY) are cytoplasmic. Residues 53-76 (MLNLAISDLLFVFTLPFRIYYFVV) form a helical membrane-spanning segment. The Extracellular segment spans residues 77-89 (RNWPFGDVLCKIS). A disulfide bridge connects residues Cys-86 and Cys-165. The helical transmembrane segment at 90 to 109 (VTLFYTNMYGSILFLTCISV) threads the bilayer. Topologically, residues 110 to 130 (DRFLAIVHPFRSKTLRTKRNA) are cytoplasmic. A helical membrane pass occupies residues 131–151 (RIVCVAVWITVLAGSTPASFF). The Extracellular portion of the chain corresponds to 152–178 (QSTNRQNNTEQRTCFENFPESTWKTYL). A helical membrane pass occupies residues 179-206 (SRIVIFIEIVGFFIPLILNVTCSTMVLR). The Cytoplasmic portion of the chain corresponds to 207-224 (TLNKPLTLSRNKLSKKKV). Residues 225-250 (LKMIFVHLVIFCFCFVPYNITLILYS) form a helical membrane-spanning segment. Residues 251 to 269 (LMRTQTWINCSVVTAVRTM) lie on the Extracellular side of the membrane. Residues 270–289 (YPVTLCIAVSNCCFDPIVYY) traverse the membrane as a helical segment. A lipid anchor (S-palmitoyl cysteine) is attached at Cys-281. Residues 290–308 (FTSDTNSELDKKQQVHQNT) lie on the Cytoplasmic side of the membrane.

This sequence belongs to the G-protein coupled receptor 1 family. As to expression, induced in activated T-cells.

The protein localises to the cell membrane. In terms of biological role, binds to oleoyl-L-alpha-lysophosphatidic acid (LPA). Intracellular cAMP is involved in the receptor activation. This is Lysophosphatidic acid receptor 6 (LPAR6) from Gallus gallus (Chicken).